A 335-amino-acid chain; its full sequence is Karyogamy protein KAR4 (335 aa).

Residues 1–25 (MAFQDPTYDQNKSRHINNSHLQGPN) form a disordered region. Positions 16-25 (INNSHLQGPN) are enriched in polar residues.

Belongs to the MT-A70-like family. In terms of assembly, component of the MIS (mRNA N6-methyladenosine (m6A) methylation) complex, at least composed of IME4, KAR4, MUM2, SLZ1, and VIR1. Interacts with VIR1.

It localises to the nucleus. The protein localises to the cytoplasm. Functionally, component of the MIS complex, a complex that mediates N6-methyladenosine (m6A) methylation of meiotic mRNAs and is required for initiation of meiosis, progression through the meiotic divisions and sporulation. May assist STE12 in the pheromone-dependent expression of KAR3 and CIK1. This Saccharomyces cerevisiae (strain ATCC 204508 / S288c) (Baker's yeast) protein is Karyogamy protein KAR4 (KAR4).